A 541-amino-acid polypeptide reads, in one-letter code: Eukaryotic translation initiation factor 3 subunit L (541 aa).

The PCI domain occupies 308-516 (TFSDILLYIQ…IHIADTKVSH (209 aa)).

The protein belongs to the eIF-3 subunit L family. As to quaternary structure, component of the eukaryotic translation initiation factor 3 (eIF-3) complex. The eIF-3 complex interacts with pix.

The protein resides in the cytoplasm. Component of the eukaryotic translation initiation factor 3 (eIF-3) complex, which is involved in protein synthesis of a specialized repertoire of mRNAs and, together with other initiation factors, stimulates binding of mRNA and methionyl-tRNAi to the 40S ribosome. The eIF-3 complex specifically targets and initiates translation of a subset of mRNAs involved in cell proliferation. This is Eukaryotic translation initiation factor 3 subunit L from Drosophila pseudoobscura pseudoobscura (Fruit fly).